The primary structure comprises 279 residues: Movement protein (279 aa).

It belongs to the cucumovirus movement protein family.

The protein localises to the host cell junction. It localises to the host plasmodesma. Functionally, transports viral genome to neighboring plant cells directly through plasmosdesmata, without any budding. The movement protein allows efficient cell to cell propagation, by bypassing the host cell wall barrier. Acts by forming a tubular structure at the host plasmodesmata, enlarging it enough to allow free passage of virion capsids. This Cucumber mosaic virus (strain As) (CMV) protein is Movement protein.